The chain runs to 70 residues: Translational regulator CsrA (70 aa).

It belongs to the CsrA/RsmA family. Homodimer; the beta-strands of each monomer intercalate to form a hydrophobic core, while the alpha-helices form wings that extend away from the core.

It is found in the cytoplasm. Its function is as follows. A key translational regulator that binds mRNA to regulate translation initiation and/or mRNA stability. Mediates global changes in gene expression, shifting from rapid growth to stress survival by linking envelope stress, the stringent response and the catabolite repression systems. Usually binds in the 5'-UTR; binding at or near the Shine-Dalgarno sequence prevents ribosome-binding, repressing translation, binding elsewhere in the 5'-UTR can activate translation and/or stabilize the mRNA. Its function is antagonized by small RNA(s). The chain is Translational regulator CsrA from Hydrogenovibrio crunogenus (strain DSM 25203 / XCL-2) (Thiomicrospira crunogena).